Consider the following 131-residue polypeptide: Small ribosomal subunit protein uS9 (131 aa).

Belongs to the universal ribosomal protein uS9 family.

This is Small ribosomal subunit protein uS9 from Mannheimia succiniciproducens (strain KCTC 0769BP / MBEL55E).